Reading from the N-terminus, the 485-residue chain is MTITPQQLIALLPLLIVGLTVVVVMLSIAWRRNHFVNATLAVVGLNLALFSLYFVGQAGPMDVTPLLRIDAYSMFYTGLVILASLATCTFAYPWLATYPDNREEFYLLVLIAALGGVVLASASHLASLFIGIELISLPLFGLVGYAFQQKRSLEAAIKYTILSAAASSFLLFGMALVYADSGNLGFMALGRSLNDDVIHQPLLLAGLGLMIVGFGFKLSLVPFHLWTPDVYQGAPAPVSTFLATASKIAIFGVLMRLFMYAPMANSEGVRTVLGIIAVASMLFGNLMAISQSNIKRLLGYSSIAHLGYLLVALIAVQSQQLSVETVGVYLAGYLFSSLGAFGVVSLMSSPYRGPDAESLYSYRGLFWHRPILAAVMTVMMLSLAGIPMTLGFIGKFYVIAVGVNAHLWWLTGAVVLGSAIGLYYYLRMTVSLYLSPPELMQRDSPANWAFTAGGVVVLISAILVLVLGIYPQPLISLVNLAQPLH.

14 helical membrane passes run 8-28 (LIALLPLLIVGLTVVVVMLSI), 35-55 (FVNATLAVVGLNLALFSLYFV), 75-95 (FYTGLVILASLATCTFAYPWL), 105-125 (FYLLVLIAALGGVVLASASHL), 127-147 (SLFIGIELISLPLFGLVGYAF), 159-179 (YTILSAAASSFLLFGMALVYA), 203-223 (LLAGLGLMIVGFGFKLSLVPF), 235-255 (PAPVSTFLATASKIAIFGVLM), 271-291 (TVLGIIAVASMLFGNLMAISQ), 297-317 (LLGYSSIAHLGYLLVALIAVQ), 326-346 (VGVYLAGYLFSSLGAFGVVSL), 373-393 (AAVMTVMMLSLAGIPMTLGFI), 408-427 (WWLTGAVVLGSAIGLYYYLR), and 449-469 (AFTAGGVVVLISAILVLVLGI).

Belongs to the complex I subunit 2 family. As to quaternary structure, NDH-1 is composed of 13 different subunits. Subunits NuoA, H, J, K, L, M, N constitute the membrane sector of the complex.

It is found in the cell inner membrane. The enzyme catalyses a quinone + NADH + 5 H(+)(in) = a quinol + NAD(+) + 4 H(+)(out). In terms of biological role, NDH-1 shuttles electrons from NADH, via FMN and iron-sulfur (Fe-S) centers, to quinones in the respiratory chain. The immediate electron acceptor for the enzyme in this species is believed to be ubiquinone. Couples the redox reaction to proton translocation (for every two electrons transferred, four hydrogen ions are translocated across the cytoplasmic membrane), and thus conserves the redox energy in a proton gradient. The sequence is that of NADH-quinone oxidoreductase subunit N from Erwinia tasmaniensis (strain DSM 17950 / CFBP 7177 / CIP 109463 / NCPPB 4357 / Et1/99).